The primary structure comprises 252 residues: Trans-aconitate 2-methyltransferase (252 aa).

The protein belongs to the methyltransferase superfamily. Tam family.

It localises to the cytoplasm. The enzyme catalyses trans-aconitate + S-adenosyl-L-methionine = (E)-3-(methoxycarbonyl)pent-2-enedioate + S-adenosyl-L-homocysteine. In terms of biological role, catalyzes the S-adenosylmethionine monomethyl esterification of trans-aconitate. The chain is Trans-aconitate 2-methyltransferase from Shigella flexneri.